Consider the following 1114-residue polypeptide: Extracellular sulfatase SULF-1 homolog (1114 aa).

An N-terminal signal peptide occupies residues 1 to 25 (MMRHSSLRLIIGGLILLLFVLNVFS). Positions 62, 63, and 98 each coordinate Ca(2+). The active-site Nucleophile is the C98. At C98 the chain carries 3-oxoalanine (Cys). N122, N159, N181, N208, and N251 each carry an N-linked (GlcNAc...) asparagine glycan. Ca(2+) contacts are provided by D327 and H328. The N-linked (GlcNAc...) asparagine glycan is linked to N447. Residues 466-479 (SSSSTAATLMSSTA) show a composition bias toward low complexity. A disordered region spans residues 466–504 (SSSSTAATLMSSTAQQPEDGEEEVETDNEEDDVDGDGAM). A compositionally biased stretch (acidic residues) spans 483–502 (EDGEEEVETDNEEDDVDGDG). N-linked (GlcNAc...) asparagine glycans are attached at residues N683, N713, and N743. A disordered region spans residues 781 to 812 (KQLRESNKQALAAGRRNDNRRRNDQSVLDSGA). Over residues 795–804 (RRNDNRRRND) the composition is skewed to basic and acidic residues. N817 carries N-linked (GlcNAc...) asparagine glycosylation. Positions 876-895 (ADSKEMAREARRKLKEERQR) are enriched in basic and acidic residues. The interval 876–901 (ADSKEMAREARRKLKEERQRKKERKR) is disordered. N-linked (GlcNAc...) asparagine glycans are attached at residues N945, N955, and N974. The segment at 1073-1114 (LSKYNRLTGSQQSHMKRRPWKQTPLQQSPRFLRTHSVTPAQA) is disordered. A compositionally biased stretch (polar residues) spans 1095-1114 (TPLQQSPRFLRTHSVTPAQA).

This sequence belongs to the sulfatase family. Requires Ca(2+) as cofactor. Post-translationally, the conversion to 3-oxoalanine (also known as C-formylglycine, FGly), of a serine or cysteine residue in prokaryotes and of a cysteine residue in eukaryotes, is critical for catalytic activity.

The protein localises to the endoplasmic reticulum. Its subcellular location is the golgi apparatus. It localises to the golgi stack. It is found in the cell surface. In Drosophila melanogaster (Fruit fly), this protein is Extracellular sulfatase SULF-1 homolog (Sulf1).